Here is a 443-residue protein sequence, read N- to C-terminus: MRKFFGTDGIRGKVGAGKMTPELALKLGWAAGRVLSRSGTKKVIIGKDTRISGYLFESAMEAGLSAAGLNVMLMGPMPTPAVAYLTRTFRAEAGVVISASHNPYYDNGIKFFSNDGSKLDDEVELEIERELDKPLTCVESHLLGKVSRIDDAPGRYIEYCKGNFPAEHTLHGLKIVVDCAHGATYHIAPSVFRELGAEVIAIGDKPDGLNINHEVGATSMGKIRETVIGENADLGIALDGDGDRIMMVNRHGKVIDGDEILYILAYDAQSRGVLRGGVVGTLMSNLGLDLALQELDIPFDRSNVGDRYVMTMMKEKGWRIGGENSGHILNLDHGTTGDGIVAGILVLAAMRRRNATLEELTENIKMLPQVLVNVRFEGAHNPLESEQVLAAKSEVEALLGERGRVLLRKSGTEPLIRVMVEGDVEADVIKHANYIADAVRNLV.

The Phosphoserine intermediate role is filled by S100. S100, D239, D241, and D243 together coordinate Mg(2+). S100 carries the post-translational modification Phosphoserine.

This sequence belongs to the phosphohexose mutase family. The cofactor is Mg(2+). Post-translationally, activated by phosphorylation.

The enzyme catalyses alpha-D-glucosamine 1-phosphate = D-glucosamine 6-phosphate. In terms of biological role, catalyzes the conversion of glucosamine-6-phosphate to glucosamine-1-phosphate. The chain is Phosphoglucosamine mutase from Shewanella sediminis (strain HAW-EB3).